The primary structure comprises 120 residues: Glycine cleavage system H protein (120 aa).

Residues 17–99 (VATVGITAHA…QGAGWLYRLK (83 aa)) enclose the Lipoyl-binding domain. An N6-lipoyllysine modification is found at lysine 58.

The protein belongs to the GcvH family. As to quaternary structure, the glycine cleavage system is composed of four proteins: P, T, L and H. It depends on (R)-lipoate as a cofactor.

Functionally, the glycine cleavage system catalyzes the degradation of glycine. The H protein shuttles the methylamine group of glycine from the P protein to the T protein. The protein is Glycine cleavage system H protein of Methylorubrum populi (strain ATCC BAA-705 / NCIMB 13946 / BJ001) (Methylobacterium populi).